A 478-amino-acid chain; its full sequence is Transcript termination protein A18 (478 aa).

The region spanning 98 to 254 (KLSTHRPMYM…NDVVNVLKVS (157 aa)) is the Helicase ATP-binding domain. Residue 111-118 (LSCGFGKT) participates in ATP binding. The DESH box motif lies at 204–207 (DESH). The Helicase C-terminal domain maps to 302–454 (PRNNLIVDTV…IVSVSTDKLG (153 aa)). The tract at residues 456–478 (QQEGKEGTKEEPALTKAFSSQIR) is disordered. Over residues 458–468 (EGKEGTKEEPA) the composition is skewed to basic and acidic residues.

This sequence belongs to the helicase family. Poxviruses subfamily. Interacts with G2. Might be part of a transcription complex composed at least of G2, A18, and H5.

It localises to the virion. DNA helicase which seems to act as a postreplicative transcription termination factor. Involved in ATP-dependent release of nascent RNA. Forms a stable complex with single-stranded DNA, and to a lesser extent RNA. The sequence is that of Transcript termination protein A18 from Oryctolagus cuniculus (Rabbit).